The following is a 146-amino-acid chain: Large ribosomal subunit protein uL15 (146 aa).

Positions 18 to 45 (VLGRGLGCGKGKTSGRGHKGQKARSGCA) are disordered. Residues 30 to 39 (TSGRGHKGQK) show a composition bias toward basic residues.

It belongs to the universal ribosomal protein uL15 family. In terms of assembly, part of the 50S ribosomal subunit.

Binds to the 23S rRNA. The polypeptide is Large ribosomal subunit protein uL15 (Anaplasma marginale (strain St. Maries)).